The primary structure comprises 344 residues: Dihydroorotase (344 aa).

The Zn(2+) site is built by His-13 and His-15. Residues 15 to 17 (HLR) and Asn-41 each bind substrate. Lys-99, His-136, and His-174 together coordinate Zn(2+). The residue at position 99 (Lys-99) is an N6-carboxylysine. His-136 is a binding site for substrate. Leu-219 contacts substrate. Asp-247 serves as a coordination point for Zn(2+). Asp-247 is a catalytic residue. Residues His-251 and Ala-263 each contribute to the substrate site.

The protein belongs to the metallo-dependent hydrolases superfamily. DHOase family. Class II DHOase subfamily. Homodimer. Zn(2+) is required as a cofactor.

The catalysed reaction is (S)-dihydroorotate + H2O = N-carbamoyl-L-aspartate + H(+). Its pathway is pyrimidine metabolism; UMP biosynthesis via de novo pathway; (S)-dihydroorotate from bicarbonate: step 3/3. Its function is as follows. Catalyzes the reversible cyclization of carbamoyl aspartate to dihydroorotate. The chain is Dihydroorotase from Acinetobacter baylyi (strain ATCC 33305 / BD413 / ADP1).